A 3132-amino-acid chain; its full sequence is Enniatin synthetase (3132 aa).

The condensation 1 stretch occupies residues 53 to 466; it reads ADDKQRAVGH…VEKVDMMTQE (414 aa). Residues 186–212 are disordered; sequence NDEHPRQFETPDSSQATPEEDLQPNPS. The interval 495–887 is adenylation 1; it reads SQSPNKAAVA…GRMDSQVKIR (393 aa). Residues 994-1013 form a disordered region; sequence SQKTHSTPSQQSQAAISSGT. One can recognise a Carrier 1 domain in the interval 1010–1086; that stretch reads SSGTDTETKL…GLKAIVIGTS (77 aa). Position 1047 is an O-(pantetheine 4'-phosphoryl)serine (S1047). A condensation 2 region spans residues 1105–1534; sequence SYAQNRMWFL…ETCISVLPLT (430 aa). The segment at 1563–1960 is adenylation 2; that stretch reads FREQAAANPE…GRMDNQFKIR (398 aa). Residues 2021 to 2177 form an S-adenosyl-L-methionine-dependent N-methyltransferase region; that stretch reads EGWQDHFESG…YLAEVIDGLI (157 aa). Carrier domains follow at residues 2504-2578 and 2598-2672; these read FPIS…RQGL and APRT…ESSH. S2538 and S2632 each carry O-(pantetheine 4'-phosphoryl)serine. The condensation 3 stretch occupies residues 2719-3124; the sequence is QDVYPSTQMQ…RHVLEEVCKT (406 aa).

This sequence belongs to the NRP synthetase family. The cofactor is pantetheine 4'-phosphate.

It functions in the pathway antibiotic biosynthesis; enniatin biosynthesis. Its function is as follows. Nonribosomal peptide synthetase that synthesizes enniatin by coupling three D-hydroxycarboxylic acids and three L-amino acids via amide and ester bonds in an alternating fashion. Whereas ESYN1 can accept different amino acids as precursors (L-valine, L-isoleucine or L-leucine), only one species of D-hydroxycarboxylic acid can be found in natural enniatin isolates (D-hydroxyisovaleric acid, D-Hiv). D-Hiv stems from L-valine deanimation by a valine aminotransferase to 2-keto-isovaleric acid (2-Kiv), which becomes subsequently reduced by a keto-isovaleric acid reductase (KivR) to D-Hiv. The polypeptide is Enniatin synthetase (Fusarium oxysporum (Fusarium vascular wilt)).